The sequence spans 253 residues: Chemokine-binding protein (253 aa).

The N-terminal stretch at 1-17 (MKQYIVLACMCLAAAAM) is a signal peptide. Residues 62–87 (TEITESESDPEVESEDDSTSVEDVDP) are disordered. Acidic residues predominate over residues 65 to 86 (TESESDPEVESEDDSTSVEDVD).

Belongs to the orthopoxvirus OPG001 family. As to quaternary structure, binds to host CC chemokines, such as RANTES/CCL5, MIP-1alpha/CCL3, MCP-1/CCL2 and eotaxin.

The protein resides in the secreted. Inhibits host immune defense by binding to host chemokines. Binds host CC chemokines (beta chemokines) such as RANTES with high affinity, but not CXC or C chemokines (alpha and gamma chemokines). The sequence is that of Chemokine-binding protein (OPG001) from Variola virus (isolate Human/India/Ind3/1967) (VARV).